Reading from the N-terminus, the 431-residue chain is MLNDHDRIFTNIYGMHDRSLKGAMARGHWDGTAAILGNGRDWIIEQVKASGLRGRGGAGFPTGLKWSFMPKQSDGRPSFLVINADESEPGTCKDREIMRHDPHTLIEGALIAGFAMGARAAYIYIRGEYVREKEALQAAIDECYEAGLIGKNACRSDYDFDVYLHHGAGAYICGEETALLESLEGKKGMPRMKPPFPAGSGLYGCPTTVNNVESIAVVPTILRRGGAWFAGIGRPNNTGVKLFAMSGHVNTPCVVEEAMSISMKELIEKHGGGVRGGWKNLKAVIPGGASCPVIPAHLCEDAIMDYDGMREKQSSFGTACLIVMDQQTDIIKAIARLSKFFKHESCGQCTPCREGTSWMWRVMERLVTGEAEVEEIDMLFSVTKQVEGHTICALGDAAAWPIQGLIRHYREEIEDRIKARKTGRMGAMAAE.

54 to 63 (GRGGAGFPTG) contacts NAD(+). 167 to 214 (GAGAYICGEETALLESLEGKKGMPRMKPPFPAGSGLYGCPTTVNNVES) serves as a coordination point for FMN. 4 residues coordinate [4Fe-4S] cluster: cysteine 346, cysteine 349, cysteine 352, and cysteine 392.

Belongs to the complex I 51 kDa subunit family. The cofactor is FMN. Requires [4Fe-4S] cluster as cofactor.

The enzyme catalyses a quinone + NADH + 5 H(+)(in) = a quinol + NAD(+) + 4 H(+)(out). Its function is as follows. NDH-1 shuttles electrons from NADH, via FMN and iron-sulfur (Fe-S) centers, to quinones in the respiratory chain. The immediate electron acceptor for the enzyme in this species is believed to be ubiquinone. Couples the redox reaction to proton translocation (for every two electrons transferred, four hydrogen ions are translocated across the cytoplasmic membrane), and thus conserves the redox energy in a proton gradient. This is NADH-quinone oxidoreductase subunit F (nuoF) from Rhodobacter capsulatus (Rhodopseudomonas capsulata).